Consider the following 132-residue polypeptide: ATP synthase epsilon chain (132 aa).

Belongs to the ATPase epsilon chain family. In terms of assembly, F-type ATPases have 2 components, CF(1) - the catalytic core - and CF(0) - the membrane proton channel. CF(1) has five subunits: alpha(3), beta(3), gamma(1), delta(1), epsilon(1). CF(0) has three main subunits: a, b and c.

It is found in the cell inner membrane. Produces ATP from ADP in the presence of a proton gradient across the membrane. This is ATP synthase epsilon chain from Jannaschia sp. (strain CCS1).